A 424-amino-acid polypeptide reads, in one-letter code: Serine--tRNA ligase (424 aa).

231-233 (TAE) serves as a coordination point for L-serine. 262–264 (RSE) contributes to the ATP binding site. E285 contributes to the L-serine binding site. Residue 349–352 (EISS) coordinates ATP. Position 385 (S385) interacts with L-serine.

The protein belongs to the class-II aminoacyl-tRNA synthetase family. Type-1 seryl-tRNA synthetase subfamily. Homodimer. The tRNA molecule binds across the dimer.

It localises to the cytoplasm. The catalysed reaction is tRNA(Ser) + L-serine + ATP = L-seryl-tRNA(Ser) + AMP + diphosphate + H(+). It carries out the reaction tRNA(Sec) + L-serine + ATP = L-seryl-tRNA(Sec) + AMP + diphosphate + H(+). It participates in aminoacyl-tRNA biosynthesis; selenocysteinyl-tRNA(Sec) biosynthesis; L-seryl-tRNA(Sec) from L-serine and tRNA(Sec): step 1/1. In terms of biological role, catalyzes the attachment of serine to tRNA(Ser). Is also able to aminoacylate tRNA(Sec) with serine, to form the misacylated tRNA L-seryl-tRNA(Sec), which will be further converted into selenocysteinyl-tRNA(Sec). The protein is Serine--tRNA ligase of Bacillus cereus (strain AH187).